The sequence spans 95 residues: MKITKVAVAGTLESSDVQVRVQPFDSLDIEINSSVAKQFGEQIEATVREVLAKLGITAAQVIVEDKGALDCVLQARVKAAAMRATDEAINWEAVL.

S14 bears the O-(phosphoribosyl dephospho-coenzyme A)serine mark.

The protein belongs to the CitD family. Oligomer with a subunit composition of (alpha,beta,gamma)6.

The protein localises to the cytoplasm. In terms of biological role, covalent carrier of the coenzyme of citrate lyase. The protein is Citrate lyase acyl carrier protein of Haemophilus influenzae (strain ATCC 51907 / DSM 11121 / KW20 / Rd).